A 416-amino-acid polypeptide reads, in one-letter code: Basic salivary proline-rich protein 2 (416 aa).

The first 16 residues, 1–16 (MLLILLSVALLALSSA), serve as a signal peptide directing secretion. Gln-17 bears the Pyrrolidone carboxylic acid mark. A compositionally biased stretch (polar residues) spans 19–28 (LNEDVSQEES). The segment at 19-416 (LNEDVSQEES…QGGRPSRPPQ (398 aa)) is disordered. Ser-24 is modified (phosphoserine). Over residues 34–47 (GNPQGAPPQGGNKP) the composition is skewed to low complexity. Composition is skewed to pro residues over residues 48–104 (QGPP…PPPQ) and 112–165 (RSPP…PPPQ). At Ser-52 the chain carries Phosphoserine. Repeat copies occupy residues 53–72 (PPGK…QGPP), 74–93 (PPGK…QGPP), 94–113 (PPGK…SPRS), 114–133 (PPGK…QGPP), 135–154 (PPGK…QGPP), 155–174 (PPGK…RSSR), 176–195 (PPGK…QGPP), 197–216 (PPGK…QGPP), 217–236 (PPGK…QSAR), 238–257 (PPGK…QGPP), 259–278 (PPGK…QGPP), 279–298 (PPGK…RSSR), 300–319 (PPGK…QGPP), 321–340 (PPGK…QGPP), and 341–360 (PPGK…RSAR). A 15 X 20 AA approximate tandem repeats of P-P-G-K-P-Q-G-P-P-P-Q-G-[GD]-[NKS]-[KSQ]-[PRS]-[QRS] [GPS]-[PSAR]-[PSR] region spans residues 53–360 (PPGKPQGPPP…QGGSKSRSAR (308 aa)). Asn-168 carries an N-linked (GlcNAc...) asparagine glycan. The span at 177–227 (PGKPQGPPPQGGNQPQGPPPPPGKPQGPPPQGGNKPQGPPPPGKPQGPPPQ) shows a compositional bias: pro residues. An N-linked (GlcNAc...) asparagine glycan is attached at Asn-230. Ser-232 carries an O-linked (Hex) serine glycan. The span at 239–289 (PGKPQGPPPQGGNQPQGPPPPPGKPQGPPPQGGNKPQGPPPPGKPQGPPPQ) shows a compositional bias: pro residues. Residue Asn-272 is glycosylated (N-linked (GlcNAc...) asparagine). Positions 290 to 300 (GGSKSRSSRSP) are enriched in low complexity. Pro residues-rich tracts occupy residues 301 to 351 (PGKP…PPPQ) and 378 to 416 (QGPP…RPPQ).

Post-translationally, N- and O-glycosylated. In head and neck cancer patients, O-glycosylated with glucosylgalactosyl carbohydrate moiety. This modification would require prior hydroxylation on the lysine residue. In terms of processing, proteolytically cleaved at the tripeptide Xaa-Pro-Gln, where Xaa in the P(3) position is mostly lysine. The endoprotease may be of microbial origin. Pyroglutamate formation occurs on terminal Gln residues of cleaved peptides. Pyroglutamate formation found on at least Gln-398 and Gln-400.

Its subcellular location is the secreted. This chain is Basic salivary proline-rich protein 2 (PRB2), found in Homo sapiens (Human).